A 146-amino-acid chain; its full sequence is Large ribosomal subunit protein uL15 (146 aa).

The disordered stretch occupies residues 1–46 (MAIELHDLKPAPGAHKAKTRVGRGEGSKGKTAGRGTKGTGARKNVP). A compositionally biased stretch (low complexity) spans 29 to 43 (GKTAGRGTKGTGARK).

Belongs to the universal ribosomal protein uL15 family. As to quaternary structure, part of the 50S ribosomal subunit.

Binds to the 23S rRNA. This Cutibacterium acnes (strain DSM 16379 / KPA171202) (Propionibacterium acnes) protein is Large ribosomal subunit protein uL15.